We begin with the raw amino-acid sequence, 89 residues long: DNA maturase A (89 aa).

Gp18 and gp19 associate with DNA and prohead.

Its function is as follows. During the growth of this phage, DNA is synthesized as concatemers. During DNA packaging mature monomers are cut from the concatemers. This is DNA maturase A (18) from Enterobacteria phage T3 (Bacteriophage T3).